Consider the following 357-residue polypeptide: UDP-N-acetylglucosamine--N-acetylmuramyl-(pentapeptide) pyrophosphoryl-undecaprenol N-acetylglucosamine transferase (357 aa).

Residues 13 to 15 (SAG), Arg166, Ser196, and Gln291 each bind UDP-N-acetyl-alpha-D-glucosamine.

Belongs to the glycosyltransferase 28 family. MurG subfamily.

It is found in the cell membrane. It catalyses the reaction di-trans,octa-cis-undecaprenyl diphospho-N-acetyl-alpha-D-muramoyl-L-alanyl-D-glutamyl-meso-2,6-diaminopimeloyl-D-alanyl-D-alanine + UDP-N-acetyl-alpha-D-glucosamine = di-trans,octa-cis-undecaprenyl diphospho-[N-acetyl-alpha-D-glucosaminyl-(1-&gt;4)]-N-acetyl-alpha-D-muramoyl-L-alanyl-D-glutamyl-meso-2,6-diaminopimeloyl-D-alanyl-D-alanine + UDP + H(+). The protein operates within cell wall biogenesis; peptidoglycan biosynthesis. In terms of biological role, cell wall formation. Catalyzes the transfer of a GlcNAc subunit on undecaprenyl-pyrophosphoryl-MurNAc-pentapeptide (lipid intermediate I) to form undecaprenyl-pyrophosphoryl-MurNAc-(pentapeptide)GlcNAc (lipid intermediate II). This chain is UDP-N-acetylglucosamine--N-acetylmuramyl-(pentapeptide) pyrophosphoryl-undecaprenol N-acetylglucosamine transferase, found in Clostridium perfringens (strain SM101 / Type A).